The following is a 202-amino-acid chain: MNIIRKIVKSCKDEEEHKPNPVSAPPDDDDLWLPPPEYVPLAEITGKKNMRNFCINGEVKVCSPNGYSFRILRHILKSFEGVYSGNRRMIGLVKVVIGLAQSGAPVPEGMNWVYKIRRTLVFQWAESSGPLDGEELEYSQEITWDDDSEFVGLQIRVSARQCHIQGRLWCINMNSRACQLWADMSLKTQQSNEDKNTSLLLE.

The PPXY motif motif lies at 35–38 (PPEY). The essential for glycoprotein binding stretch occupies residues 115–151 (KIRRTLVFQWAESSGPLDGEELEYSQEITWDDDSEFV).

This sequence belongs to the lyssavirus matrix protein family. In terms of assembly, homomultimer. Interacts with nucleoprotein and with the cytoplasmic domain of glycoprotein.

It localises to the virion membrane. It is found in the host endomembrane system. Functionally, plays a major role in assembly and budding of virion. Completely covers the ribonucleoprotein coil and keep it in condensed bullet-shaped form. Inhibits viral transcription and stimulates replication. Plays a major role in early induction of TRAIL-mediated apoptosis in infected neurons. The polypeptide is Matrix protein (M) (Irkut virus (IRKV)).